Reading from the N-terminus, the 297-residue chain is Vacuolar protein sorting-associated protein 26C (297 aa).

It belongs to the VPS26 family. In terms of assembly, component of the commander complex that is essential for endosomal recycling of transmembrane cargos; the commander complex is composed of the CCC subcomplex and the retriever subcomplex. Component of the heterotrimeric retriever complex consisting of VPS26C, VPS29 and VPS35L; within the complex interacts with VPS35L. Interacts with SNX17 (via C-terminus); the interaction is direct and associates SNX17 with the retriever complex. Interacts with SNX31; the interaction is direct.

Its subcellular location is the endosome. Functionally, component of the commander complex that is essential for endosomal recycling of transmembrane cargos; the commander complex is composed of the CCC subcomplex and the retriever subcomplex. Component of the retriever complex, which is a heterotrimeric complex related to retromer cargo-selective complex (CSC) and essential for retromer-independent retrieval and recycling of numerous cargos such as integrin alpha-5/beta-1 (ITGA5:ITGB1). The recruitment of the retriever complex to the endosomal membrane involves CCC and WASH complexes. In the endosomes, drives the retriever and recycling of NxxY-motif-containing cargo proteins by coupling to SNX17, a cargo essential for the homeostatic maintenance of numerous cell surface proteins associated with processes that include cell migration, cell adhesion, nutrient supply and cell signaling. The sequence is that of Vacuolar protein sorting-associated protein 26C from Mus musculus (Mouse).